The primary structure comprises 436 residues: 3-ketoacyl-CoA thiolase (436 aa).

Residue Cys99 is the Acyl-thioester intermediate of the active site. Active-site proton acceptor residues include His392 and Cys422.

It belongs to the thiolase-like superfamily. Thiolase family. Heterotetramer of two alpha chains (FadJ) and two beta chains (FadI).

Its subcellular location is the cytoplasm. The enzyme catalyses an acyl-CoA + acetyl-CoA = a 3-oxoacyl-CoA + CoA. It functions in the pathway lipid metabolism; fatty acid beta-oxidation. Catalyzes the final step of fatty acid oxidation in which acetyl-CoA is released and the CoA ester of a fatty acid two carbons shorter is formed. This chain is 3-ketoacyl-CoA thiolase, found in Escherichia coli O9:H4 (strain HS).